Here is a 68-residue protein sequence, read N- to C-terminus: U2-agatoxin-Ao1u (68 aa).

The N-terminal stretch at 1–20 (MKAIISLLLISAMVFSMIEA) is a signal peptide. Positions 21–34 (VPLEEGLQLFEGER) are excised as a propeptide. Cystine bridges form between C36–C52, C43–C57, and C51–C67.

This sequence belongs to the neurotoxin 01 (U2-agtx) family. As to expression, expressed by the venom gland.

The protein resides in the secreted. In terms of biological role, insect active toxin causing rapid but reversible paralysis in crickets. No activity shown in mammals. Does not show effect on mammalian voltage-gated calcium channels. The polypeptide is U2-agatoxin-Ao1u (Agelena orientalis (Funnel-web spider)).